We begin with the raw amino-acid sequence, 248 residues long: Carboxy-S-adenosyl-L-methionine synthase (248 aa).

Residues tyrosine 40, 65 to 67 (GCS), 95 to 96 (DN), 123 to 124 (DI), asparagine 138, and arginine 205 each bind S-adenosyl-L-methionine.

It belongs to the class I-like SAM-binding methyltransferase superfamily. Cx-SAM synthase family. As to quaternary structure, homodimer.

The catalysed reaction is prephenate + S-adenosyl-L-methionine = carboxy-S-adenosyl-L-methionine + 3-phenylpyruvate + H2O. In terms of biological role, catalyzes the conversion of S-adenosyl-L-methionine (SAM) to carboxy-S-adenosyl-L-methionine (Cx-SAM). This Hahella chejuensis (strain KCTC 2396) protein is Carboxy-S-adenosyl-L-methionine synthase.